Reading from the N-terminus, the 1401-residue chain is DNA-directed RNA polymerase subunit beta' (1401 aa).

Zn(2+) is bound by residues cysteine 70, cysteine 72, cysteine 85, and cysteine 88. Mg(2+) is bound by residues aspartate 460, aspartate 462, and aspartate 464. Cysteine 808, cysteine 882, cysteine 889, and cysteine 892 together coordinate Zn(2+).

Belongs to the RNA polymerase beta' chain family. In terms of assembly, the RNAP catalytic core consists of 2 alpha, 1 beta, 1 beta' and 1 omega subunit. When a sigma factor is associated with the core the holoenzyme is formed, which can initiate transcription. Mg(2+) is required as a cofactor. It depends on Zn(2+) as a cofactor.

It catalyses the reaction RNA(n) + a ribonucleoside 5'-triphosphate = RNA(n+1) + diphosphate. In terms of biological role, DNA-dependent RNA polymerase catalyzes the transcription of DNA into RNA using the four ribonucleoside triphosphates as substrates. This chain is DNA-directed RNA polymerase subunit beta', found in Legionella pneumophila (strain Paris).